We begin with the raw amino-acid sequence, 396 residues long: Ribose-phosphate pyrophosphokinase 1, chloroplastic (396 aa).

The transit peptide at 1–36 (MPLSYSAAAAAAPSPLAARSRGLLRRPPRSSPVVVR) directs the protein to the chloroplast. Mg(2+) is bound by residues Asp-204, His-206, Asp-215, and Asp-219. Residues 290-305 (GKVAVMMDDMIDTAGT) form a binding of phosphoribosylpyrophosphate region.

The protein belongs to the ribose-phosphate pyrophosphokinase family. The cofactor is Mg(2+).

The protein localises to the plastid. It is found in the chloroplast. The catalysed reaction is D-ribose 5-phosphate + ATP = 5-phospho-alpha-D-ribose 1-diphosphate + AMP + H(+). The sequence is that of Ribose-phosphate pyrophosphokinase 1, chloroplastic from Oryza sativa subsp. japonica (Rice).